Consider the following 367-residue polypeptide: Coiled-coil domain-containing protein 34 (367 aa).

At S55 the chain carries Phosphoserine. Disordered stretches follow at residues 77–105 (FPFGADDSEGEDEEALDEDARESESKVES), 191–228 (QKKNKQERKEREQKINKEMEEKEAKKREKEHLQEKAKE), and 310–349 (YNPIPWKPIHMPPPKEAKSGPGKKSKRHAASQPLPSSSLA). Over residues 82–97 (DDSEGEDEEALDEDAR) the composition is skewed to acidic residues. Coiled-coil stretches lie at residues 87–108 (EDEEALDEDARESESKVESLEG) and 153–280 (RLQQ…AKNK). Residues 197–228 (ERKEREQKINKEMEEKEAKKREKEHLQEKAKE) are compositionally biased toward basic and acidic residues. Residues 339-349 (ASQPLPSSSLA) show a composition bias toward low complexity.

In terms of tissue distribution, expressed in testis and sperm.

It localises to the cell projection. Its subcellular location is the cilium. The protein resides in the flagellum. Functionally, involved in spermatogenesis. Has a probable role in anterograde intraflagellar transport which is essential for the formation of sperm flagella. The sequence is that of Coiled-coil domain-containing protein 34 (Ccdc34) from Mus musculus (Mouse).